Consider the following 385-residue polypeptide: Cell division protein FtsZ (385 aa).

GTP contacts are provided by residues 20–24 (GGGGN), 107–109 (GTG), Glu-138, Arg-142, and Asn-186.

This sequence belongs to the FtsZ family. In terms of assembly, homodimer. Polymerizes to form a dynamic ring structure in a strictly GTP-dependent manner. Interacts directly with several other division proteins.

Its subcellular location is the cytoplasm. Functionally, essential cell division protein that forms a contractile ring structure (Z ring) at the future cell division site. The regulation of the ring assembly controls the timing and the location of cell division. One of the functions of the FtsZ ring is to recruit other cell division proteins to the septum to produce a new cell wall between the dividing cells. Binds GTP and shows GTPase activity. This Buchnera aphidicola subsp. Baizongia pistaciae (strain Bp) protein is Cell division protein FtsZ.